Reading from the N-terminus, the 173-residue chain is RNA pyrophosphohydrolase (173 aa).

A Nudix hydrolase domain is found at 11–164; sequence PYRRCVGVVV…KKHVYRKVVS (154 aa). The Nudix box motif lies at 52-73; that stretch reads GGIDEGEEPLDAACRELYEETG.

The protein belongs to the Nudix hydrolase family. RppH subfamily. The cofactor is a divalent metal cation.

Functionally, accelerates the degradation of transcripts by removing pyrophosphate from the 5'-end of triphosphorylated RNA, leading to a more labile monophosphorylated state that can stimulate subsequent ribonuclease cleavage. The polypeptide is RNA pyrophosphohydrolase (Bartonella quintana (strain Toulouse) (Rochalimaea quintana)).